The following is a 345-amino-acid chain: Methionine import ATP-binding protein MetN 2 (345 aa).

The region spanning 4 to 243 is the ABC transporter domain; it reads IELRHVKKEF…PQTEIAKRFI (240 aa). An ATP-binding site is contributed by 40–47; that stretch reads GYSGAGKS.

The protein belongs to the ABC transporter superfamily. Methionine importer (TC 3.A.1.24) family. In terms of assembly, the complex is composed of two ATP-binding proteins (MetN), two transmembrane proteins (MetI) and a solute-binding protein (MetQ).

The protein resides in the cell membrane. It catalyses the reaction L-methionine(out) + ATP + H2O = L-methionine(in) + ADP + phosphate + H(+). It carries out the reaction D-methionine(out) + ATP + H2O = D-methionine(in) + ADP + phosphate + H(+). Its function is as follows. Part of the ABC transporter complex MetNIQ involved in methionine import. Responsible for energy coupling to the transport system. In Enterococcus faecalis (strain ATCC 700802 / V583), this protein is Methionine import ATP-binding protein MetN 2.